A 442-amino-acid chain; its full sequence is Methionine aminopeptidase 2 (442 aa).

The disordered stretch occupies residues 1 to 81 (MAAQAPTEAL…APTAQSDPPR (81 aa)). A compositionally biased stretch (basic residues) spans 56-72 (PLRRRRRRRRTRKKKKA). His196 provides a ligand contact to substrate. A divalent metal cation is bound by residues Asp216, Asp227, and His296. His304 serves as a coordination point for substrate. A divalent metal cation-binding residues include Glu329 and Glu423.

It belongs to the peptidase M24A family. Methionine aminopeptidase eukaryotic type 2 subfamily. The cofactor is Co(2+). Zn(2+) is required as a cofactor. Requires Mn(2+) as cofactor. It depends on Fe(2+) as a cofactor.

It is found in the cytoplasm. It carries out the reaction Release of N-terminal amino acids, preferentially methionine, from peptides and arylamides.. Its function is as follows. Cotranslationally removes the N-terminal methionine from nascent proteins. The N-terminal methionine is often cleaved when the second residue in the primary sequence is small and uncharged (Met-Ala-, Cys, Gly, Pro, Ser, Thr, or Val). The sequence is that of Methionine aminopeptidase 2 from Verticillium alfalfae (strain VaMs.102 / ATCC MYA-4576 / FGSC 10136) (Verticillium wilt of alfalfa).